The following is a 225-amino-acid chain: Dimerizing cyclase tstC (225 aa).

A signal peptide spans 1-19 (MRLSTLSSLLLGSSSIVFA). 3 N-linked (GlcNAc...) asparagine glycosylation sites follow: Asn146, Asn195, and Asn217.

This sequence belongs to the dimerizing cyclase tstC family.

The catalysed reaction is 2 [4-(deca-1,8-diyl)-2,5-dioxo-2,5-dihydro-3-furanyl]acetate + H(+) = 2-[(1R,8S,14R,15R)-11-hydroxy-14,15-bis[(6E)-oct-6-en-1-yl]-3,5,9-trioxo-4,10-dioxatetracyclo[9.4.0.0(2,6).0(8,12)]pentadeca-2(6),12-dien-8-yl]acetate + CO2. It functions in the pathway secondary metabolite biosynthesis. In terms of biological role, dimerizing cyclase; part of the gene cluster that mediates the biosynthesis of the antihypercholesterolemic agents phomoidrides which are dimeric anhydrides. Within the pathway, tstC produces the bicyclo[4.3.1]deca-1,6-diene core of phomoidrides via the dimerization of the monomeric anhydrides leading to prephomoidride. The pathway begins with the highly reducing polyketide synthase tstA that catalyzes the formation of a C12-fatty acyl-ACP, starting from one acetate and 5 malonate units. The hydrolase tstM is involved in the release of the C12-fatty acyl chain from phiA. The alkylcitrate synthase (ACS) tstJ and the alkylcitrate dehydratase (ACDH) tstI then give rise to decarboxylated monomeric anhydrides by coupling the C12-fatty acyl chain with oxalacetic acid. The cyclase tstC is responsible for the dimerization of the monomeric anhydrides which leads to the production of prephomoidride that contains the characteristic bicyclo[4.3.1]deca-1,6-diene system of phomoidrides. Iterative oxidation catalyzed by the alpha-ketoglutarate-dependent dioxygenase tstK produced then phomoidride A. Finally, the methyltransferase tstE converts phomoidride A to phomoidride B via an acetalization reaction. The phosphatidylethanolamine-binding protein tstB and tstN are not essential for dimerization and their functions have still to be determined. This is Dimerizing cyclase tstC from Talaromyces stipitatus (strain ATCC 10500 / CBS 375.48 / QM 6759 / NRRL 1006) (Penicillium stipitatum).